The primary structure comprises 562 residues: Glutamine--tRNA ligase (562 aa).

The 'HIGH' region motif lies at 35–45 (PEPNGYLHIGH). Residues 36–38 (EPN) and 42–48 (HIGHAKS) each bind ATP. L-glutamine contacts are provided by Asp68 and Tyr213. Residues Thr232 and 264 to 265 (RL) contribute to the ATP site. A 'KMSKS' region motif is present at residues 271–275 (ITSKR).

It belongs to the class-I aminoacyl-tRNA synthetase family. In terms of assembly, monomer.

The protein resides in the cytoplasm. It carries out the reaction tRNA(Gln) + L-glutamine + ATP = L-glutaminyl-tRNA(Gln) + AMP + diphosphate. The protein is Glutamine--tRNA ligase of Neisseria gonorrhoeae (strain ATCC 700825 / FA 1090).